The following is a 779-amino-acid chain: Acyl-CoA dehydrogenase family member 11 (779 aa).

Lys-175 is subject to N6-acetyllysine. Ser-210 is subject to Phosphoserine. Position 323 is a phosphotyrosine (Tyr-323). Lys-368 and Lys-390 each carry N6-succinyllysine. FAD contacts are provided by residues 503-513 (FCMTEPNVSSS), 511-513 (SSS), 537-539 (WSS), and Ser-539. Ser-513 contacts substrate. 628–631 (GPGR) contributes to the substrate binding site. FAD is bound by residues Arg-656, Gln-726, and 726 to 730 (QVHGG). A substrate-binding site is contributed by Gly-754. Residues 755–757 (PDE) and Glu-757 contribute to the FAD site. Residue Lys-765 is modified to N6-acetyllysine.

It belongs to the acyl-CoA dehydrogenase family. As to quaternary structure, homodimer. FAD is required as a cofactor.

The protein localises to the peroxisome. It is found in the mitochondrion membrane. The catalysed reaction is a 2,3-saturated acyl-CoA + oxidized [electron-transfer flavoprotein] + H(+) = a (2E)-enoyl-CoA + reduced [electron-transfer flavoprotein]. The enzyme catalyses docosanoyl-CoA + oxidized [electron-transfer flavoprotein] + H(+) = (2E)-docosenoyl-CoA + reduced [electron-transfer flavoprotein]. It catalyses the reaction tetracosanoyl-CoA + oxidized [electron-transfer flavoprotein] + H(+) = (2E)-tetracosenoyl-CoA + reduced [electron-transfer flavoprotein]. It carries out the reaction eicosanoyl-CoA + oxidized [electron-transfer flavoprotein] + H(+) = (2E)-eicosenoyl-CoA + reduced [electron-transfer flavoprotein]. The catalysed reaction is hexacosanoyl-CoA + oxidized [electron-transfer flavoprotein] + H(+) = (2E)-hexacosenoyl-CoA + reduced [electron-transfer flavoprotein]. The enzyme catalyses tricosanoyl-CoA + oxidized [electron-transfer flavoprotein] + H(+) = (2E)-tricosenoyl-CoA + reduced [electron-transfer flavoprotein]. It functions in the pathway lipid metabolism; fatty acid beta-oxidation. Its function is as follows. Acyl-CoA dehydrogenase, that exhibits maximal activity towards saturated C22-CoA. Probably participates in beta-oxydation and energy production but could also play a role in the metabolism of specific fatty acids to control fatty acids composition of cellular lipids in brain. This Rattus norvegicus (Rat) protein is Acyl-CoA dehydrogenase family member 11 (Acad11).